The following is a 285-amino-acid chain: Sulfotransferase 2A1 (285 aa).

Positions 44, 45, 46, 47, 48, and 49 each coordinate 3'-phosphoadenylyl sulfate. Residue histidine 99 is the Proton acceptor of the active site. The 3'-phosphoadenylyl sulfate site is built by arginine 121, serine 129, tyrosine 184, serine 218, methionine 223, arginine 247, lysine 248, and glycine 249. Serine 251 carries the phosphoserine modification.

The protein belongs to the sulfotransferase 1 family. Homodimer. Predominanly expressed in liver. Detected also in adrenal gland and in jejunum.

It localises to the cytoplasm. The protein resides in the cytosol. The enzyme catalyses an alcohol + 3'-phosphoadenylyl sulfate = an alkyl sulfate + adenosine 3',5'-bisphosphate + H(+). The catalysed reaction is 3beta-hydroxyandrost-5-en-17-one + 3'-phosphoadenylyl sulfate = dehydroepiandrosterone 3-sulfate + adenosine 3',5'-bisphosphate + H(+). It carries out the reaction taurolithocholate + 3'-phosphoadenylyl sulfate = taurolithocholate 3-sulfate + adenosine 3',5'-bisphosphate + H(+). It catalyses the reaction lithocholate + 3'-phosphoadenylyl sulfate = lithocholate sulfate + adenosine 3',5'-bisphosphate + H(+). The enzyme catalyses (24S)-hydroxycholesterol + 3'-phosphoadenylyl sulfate = (24S)-hydroxycholesterol 24-sulfate + adenosine 3',5'-bisphosphate + H(+). The catalysed reaction is (24S)-hydroxycholesterol + 3'-phosphoadenylyl sulfate = (24S)-hydroxycholesterol 3-sulfate + adenosine 3',5'-bisphosphate + H(+). It carries out the reaction (24S)-hydroxycholesterol 24-sulfate + 3'-phosphoadenylyl sulfate = (24S)-hydroxycholesterol 3,24-disulfate + adenosine 3',5'-bisphosphate + H(+). It catalyses the reaction pregnenolone + 3'-phosphoadenylyl sulfate = pregnenolone sulfate + adenosine 3',5'-bisphosphate + H(+). The enzyme catalyses androsterone + 3'-phosphoadenylyl sulfate = androsterone 3alpha-sulfate + adenosine 3',5'-bisphosphate + H(+). In terms of biological role, sulfotransferase that utilizes 3'-phospho-5'-adenylyl sulfate (PAPS) as sulfonate donor to catalyze the sulfonation of steroids and bile acids in the liver and adrenal glands. Mediates the sulfation of a wide range of steroids and sterols, including pregnenolone, androsterone, DHEA, bile acids, cholesterol and as well many xenobiotics that contain alcohol and phenol functional groups. Sulfonation increases the water solubility of most compounds, and therefore their renal excretion, but it can also result in bioactivation to form active metabolites. Plays an important role in maintening steroid and lipid homeostasis. Plays a key role in bile acid metabolism. In addition, catalyzes the metabolic activation of potent carcinogenic polycyclic arylmethanols. The protein is Sulfotransferase 2A1 (SULT2A1) of Macaca fascicularis (Crab-eating macaque).